Consider the following 114-residue polypeptide: NADH dehydrogenase [ubiquinone] 1 subunit C2, isoform 2 (114 aa).

The helical transmembrane segment at 56 to 75 (GLHRQLLYITAFFFAGYYLV) threads the bilayer.

The protein belongs to the complex I NDUFC2 subunit family. As to quaternary structure, complex I is composed of 45 different subunits.

The protein localises to the mitochondrion inner membrane. In terms of biological role, accessory subunit of the mitochondrial membrane respiratory chain NADH dehydrogenase (Complex I), that is believed not to be involved in catalysis. Complex I functions in the transfer of electrons from NADH to the respiratory chain. The immediate electron acceptor for the enzyme is believed to be ubiquinone. The polypeptide is NADH dehydrogenase [ubiquinone] 1 subunit C2, isoform 2 (NDUFC2-KCTD14) (Homo sapiens (Human)).